We begin with the raw amino-acid sequence, 104 residues long: Transcription elongation factor A protein-like 9 (104 aa).

A disordered region spans residues 1–48 (MKPCQKMEGNLEKEDEPKPEEEPKPEEKPEEGQEPEEEEKSEETFRER). The segment covering 9–31 (GNLEKEDEPKPEEEPKPEEKPEE) has biased composition (basic and acidic residues). Residues 32 to 41 (GQEPEEEEKS) show a composition bias toward acidic residues.

The protein belongs to the TFS-II family. TFA subfamily.

Its subcellular location is the nucleus. Its function is as follows. May be involved in transcriptional regulation. This chain is Transcription elongation factor A protein-like 9 (Tceal9), found in Mus musculus (Mouse).